The following is a 269-amino-acid chain: Chymotrypsin-like elastase family member 3B (269 aa).

An N-terminal signal peptide occupies residues 1 to 16 (MLRLLSSLLLVALASG). Residues 17–27 (CGQPSHNPSSR) constitute a propeptide, activation peptide. Positions 28-267 (VVNGEEAVPH…FIDWIEETIA (240 aa)) constitute a Peptidase S1 domain. C57 and C73 are oxidised to a cystine. Active-site charge relay system residues include H72 and D122. Cystine bridges form between C156–C222, C187–C203, and C212–C243. S216 functions as the Charge relay system in the catalytic mechanism.

This sequence belongs to the peptidase S1 family. Elastase subfamily.

It catalyses the reaction Preferential cleavage: Ala-|-Xaa. Does not hydrolyze elastin.. Its function is as follows. Efficient protease with alanine specificity but only little elastolytic activity. The chain is Chymotrypsin-like elastase family member 3B (Cela3b) from Mus musculus (Mouse).